The primary structure comprises 397 residues: Tauropine dehydrogenase (397 aa).

The protein belongs to the lysopine/nopaline/octopine/opine/vitopine dehydrogenases family.

It carries out the reaction tauropine + NAD(+) + H2O = taurine + pyruvate + NADH + H(+). Its activity is regulated as follows. Subject to substrate inhibition by pyruvate for the reverse reaction but not for the forward reaction of the tauropine dehydrogenase activity. Functionally, may play a role in maintaining a redox balance during environmental and functional hypoxia. Exhibits high specificity for taurine and in addition, requires both alpha amino group and C-2 carbon chain length as a critical factor for active site binding of the amino acid. A methyl group in the beta position may be critical for active site binding of the keto acid. In the reverse reaction requires NAD(H) for the activity but not NADP(H). The protein is Tauropine dehydrogenase of Arabella iricolor (Opal worm).